A 989-amino-acid polypeptide reads, in one-letter code: Translation initiation factor IF-2 (989 aa).

Disordered regions lie at residues 43-219 and 234-379; these read KRRR…LQAR and EARR…GGAR. Polar residues predominate over residues 72–87; sequence NTPNKDTAVTQTATKN. Residues 105-146 are compositionally biased toward low complexity; that stretch reads PKPVAAEATAQETSKAAPAAAQPVAEKEAAAPASAEAAKSAA. Over residues 149–159 the composition is skewed to basic and acidic residues; sequence VTDRGAKKTTE. Positions 160–171 are enriched in polar residues; the sequence is KNGANASGNRPS. Over residues 234-293 the composition is skewed to basic and acidic residues; that stretch reads EARRREDRLKQEADLEEQRRIEEKRRLEAEAKVEAEKQAALKEKEKAEAKARAKAEKEAK. Low complexity predominate over residues 294-303; sequence AAQAKTAGAA. A compositionally biased stretch (basic and acidic residues) spans 342 to 361; sequence PRREAPRPAMRDRKGEDRRQ. One can recognise a tr-type G domain in the interval 489–659; sequence SRPPVVTIMG…LLQAEMLELK (171 aa). Positions 498–505 are G1; it reads GHVDHGKT. A GTP-binding site is contributed by 498–505; sequence GHVDHGKT. The G2 stretch occupies residues 523 to 527; it reads GITQH. Positions 545-548 are G3; it reads DTPG. Residues 545-549 and 599-602 each bind GTP; these read DTPGH and NKMD. The segment at 599–602 is G4; the sequence is NKMD. The tract at residues 635–637 is G5; that stretch reads SAA.

This sequence belongs to the TRAFAC class translation factor GTPase superfamily. Classic translation factor GTPase family. IF-2 subfamily.

Its subcellular location is the cytoplasm. In terms of biological role, one of the essential components for the initiation of protein synthesis. Protects formylmethionyl-tRNA from spontaneous hydrolysis and promotes its binding to the 30S ribosomal subunits. Also involved in the hydrolysis of GTP during the formation of the 70S ribosomal complex. This Zymomonas mobilis subsp. mobilis (strain ATCC 31821 / ZM4 / CP4) protein is Translation initiation factor IF-2.